A 392-amino-acid chain; its full sequence is Sex-determining region Y protein (392 aa).

Residues 4–81 (HVKRPMNAFM…YKYQPHRRAK (78 aa)) are sufficient for interaction with KPNB1. The segment at residues 5 to 73 (VKRPMNAFMV…LHREKYPNYK (69 aa)) is a DNA-binding region (HMG box). Required for nuclear localization regions lie at residues 6-22 (KRPM…ERHK) and 75-81 (QPHRRAK). Residues 52-84 (RPFFQEAQRLKILHREKYPNYKYQPHRRAKVSQ) form a sufficient for interaction with EP300 region. Lysine 81 is modified (N6-acetyllysine). Residues 92 to 144 (AVASTKLYNLLQWDRNPHAITYRQDWSRAAHLYSKNQQSFYWQPVDIPTGHLQ) are necessary for interaction with ZNF208 isoform KRAB-O. Positions 94-138 (ASTKLYNLLQWDRNPHAITYRQDWSRAAHLYSKNQQSFYWQPVDI) are necessary for interaction with SLC9A3R2 and nuclear accumulation of SLC9A3R2. The tract at residues 142-361 (HLQQQQQQQQ…QQQQQQQQQQ (220 aa)) is disordered. Over residues 144-181 (QQQQQQQQQQQFHNHHQQQQQFYDHHQQQQQQQQQQQQ) the composition is skewed to low complexity. Composition is skewed to basic and acidic residues over residues 182 to 197 (FHDH…DHHQ) and 210 to 228 (QEQQ…HDHQ). Low complexity predominate over residues 229-238 (QQQQQQQQQQ). Basic and acidic residues-rich tracts occupy residues 239 to 250 (FHDHHQQKQQFH), 261 to 295 (FHDH…HDHP), and 313 to 349 (QFHD…DHHQ). Low complexity predominate over residues 350-361 (QQQQQQQQQQQQ).

The protein belongs to the SRY family. Interacts with KPNB1, ZNF208 isoform KRAB-O, PARP1 and SLC9A3R2. The interaction with KPNB1 is sensitive to dissociation by Ran in the GTP-bound form. Interaction with PARP1 impaired its DNA-binding activity. Interacts with CALM, EP300, HDAC3 and WT1. The interaction with EP300 modulates its DNA-binding activity. Degraded due to the presence of a degron at the C-terminus that promotes its degradation. In terms of processing, phosphorylated on serine residues by PKA. Phosphorylation by PKA enhances its DNA-binding activity and stimulates transcription repression. Post-translationally, acetylation of Lys-81 contributes to its nuclear localization and enhances its interaction with KPNB1. Poly-ADP-ribosylated by PARP1. ADP-ribosylation reduces its DNA-binding activity. Expressed in gonadal somatic pre-Sertoli cells. Expressed in the substantia nigra of the brain (at protein level). Expressed in diencephalon, cortex, the substantia nigra of the midbrain and the medial mammillary bodies of the hypothalamus of male, but not female. As to expression, expressed in gonadal somatic pre-Sertoli cells. While it is expressed at lower level compared to isoform Sry-S, this form is more stable and constitutes the predominant protein product of the Sry locus in XY gonads (at protein level).

It localises to the nucleus speckle. The protein localises to the cytoplasm. The protein resides in the nucleus. Transcriptional regulator that controls a genetic switch in male development. It is necessary and sufficient for initiating male sex determination by directing the development of supporting cell precursors (pre-Sertoli cells) as Sertoli rather than granulosa cells. Involved in different aspects of gene regulation including promoter activation or repression. Binds to the DNA consensus sequence 5'-[AT]AACAA[AT]-3'. SRY HMG box recognizes DNA by partial intercalation in the minor groove and promotes DNA bending. Also involved in pre-mRNA splicing. In male adult brain involved in the maintenance of motor functions of dopaminergic neurons. Functionally, constitutes the major isoform, which is necessary and sufficient for initiating male sex determination. Its function is as follows. Constitutes a minor isoform, which is unstable due to the presence of a degron at the C-terminus that promotes its degradation. Not necessary and sufficient for initiating male sex determination. The sequence is that of Sex-determining region Y protein from Mus musculus (Mouse).